The chain runs to 358 residues: MSVRTVAIAAGGTGGHVYPGLAVADALRERGHRVVWLGTRAGLEGRVVPAAGLDAEWLEIGGMRGKGLATIAALPWRLGRAVAVAGAALRRQRPDVVLGMGGYVAGPVGLAARLAGRPLIIHEQNARAGMTNRFLARLGHRVLTGFPDALGARSEWVGNPIRTRIHRLESPQERYARREGAPRVLVLGGSQGARALNRYVPQALSAIGGGQPQVLHQAGELTLEEARTEYGRAGLDGAEVVPFIEDMAGAYAWADLVVARSGALTVAELAAAGVPAVLVPLPWAVDDHQTANAEWLCAAGAARRLLQPDLEQGALGPVLAELLGDRRRLAEMGEAARGVARPDATDRVATICEEVAHG.

UDP-N-acetyl-alpha-D-glucosamine is bound by residues 13 to 15, Asn-125, Arg-162, Ser-190, Ile-244, 263 to 268, and Gln-289; these read TGG and ALTVAE.

Belongs to the glycosyltransferase 28 family. MurG subfamily.

The protein localises to the cell inner membrane. It carries out the reaction di-trans,octa-cis-undecaprenyl diphospho-N-acetyl-alpha-D-muramoyl-L-alanyl-D-glutamyl-meso-2,6-diaminopimeloyl-D-alanyl-D-alanine + UDP-N-acetyl-alpha-D-glucosamine = di-trans,octa-cis-undecaprenyl diphospho-[N-acetyl-alpha-D-glucosaminyl-(1-&gt;4)]-N-acetyl-alpha-D-muramoyl-L-alanyl-D-glutamyl-meso-2,6-diaminopimeloyl-D-alanyl-D-alanine + UDP + H(+). The protein operates within cell wall biogenesis; peptidoglycan biosynthesis. Functionally, cell wall formation. Catalyzes the transfer of a GlcNAc subunit on undecaprenyl-pyrophosphoryl-MurNAc-pentapeptide (lipid intermediate I) to form undecaprenyl-pyrophosphoryl-MurNAc-(pentapeptide)GlcNAc (lipid intermediate II). The polypeptide is UDP-N-acetylglucosamine--N-acetylmuramyl-(pentapeptide) pyrophosphoryl-undecaprenol N-acetylglucosamine transferase (Halorhodospira halophila (strain DSM 244 / SL1) (Ectothiorhodospira halophila (strain DSM 244 / SL1))).